The following is a 483-amino-acid chain: GTPase Der (483 aa).

EngA-type G domains lie at 3-167 and 212-387; these read FTLA…GEER and LRIA…EIWN. GTP is bound by residues 9–16, 56–60, 119–122, 218–225, 265–269, and 330–333; these read GRPNVGKS, DTAGL, NKAE, GRPNAGKS, DTAGM, and NKWD. A KH-like domain is found at 388–472; it reads RRISTGRLNR…PIRLSLRTSD (85 aa).

It belongs to the TRAFAC class TrmE-Era-EngA-EngB-Septin-like GTPase superfamily. EngA (Der) GTPase family. Associates with the 50S ribosomal subunit.

Functionally, GTPase that plays an essential role in the late steps of ribosome biogenesis. The sequence is that of GTPase Der from Brucella ovis (strain ATCC 25840 / 63/290 / NCTC 10512).